Consider the following 223-residue polypeptide: MNTWKEAIGQEKQQPYFQHILQQVQQARQSGRTIYPPQEEVFSAFRLTEFDQVRVVILGQDPYHGVNQAHGLAFSVKPGIAPPPSLVNIYKELSTDIMGFQTPSHGYLVGWAKQGVLLLNTVLTVEQGLAHSHANFGWETFTDRVIHVLNEQRDHLVFLLWGSHAQKKGQFIDRTKHCVLTSPHPSPLSAHRGFFGCRHFSKTNQYLRHHNLTEINWQLPMTI.

Residue Asp-61 is the Proton acceptor of the active site.

This sequence belongs to the uracil-DNA glycosylase (UDG) superfamily. UNG family.

The protein resides in the cytoplasm. The catalysed reaction is Hydrolyzes single-stranded DNA or mismatched double-stranded DNA and polynucleotides, releasing free uracil.. Functionally, excises uracil residues from the DNA which can arise as a result of misincorporation of dUMP residues by DNA polymerase or due to deamination of cytosine. The chain is Uracil-DNA glycosylase from Histophilus somni (strain 129Pt) (Haemophilus somnus).